The chain runs to 362 residues: tRNA-specific 2-thiouridylase MnmA 1 (362 aa).

ATP contacts are provided by residues 29–36 (AMSGGVDS) and Met-55. Cys-109 acts as the Nucleophile in catalysis. An intrachain disulfide couples Cys-109 to Cys-201. Gly-133 provides a ligand contact to ATP. The tract at residues 151 to 153 (KDQ) is interaction with tRNA. The active-site Cysteine persulfide intermediate is the Cys-201.

It belongs to the MnmA/TRMU family.

The protein resides in the cytoplasm. It catalyses the reaction S-sulfanyl-L-cysteinyl-[protein] + uridine(34) in tRNA + AH2 + ATP = 2-thiouridine(34) in tRNA + L-cysteinyl-[protein] + A + AMP + diphosphate + H(+). Its function is as follows. Catalyzes the 2-thiolation of uridine at the wobble position (U34) of tRNA, leading to the formation of s(2)U34. In Fusobacterium nucleatum subsp. nucleatum (strain ATCC 25586 / DSM 15643 / BCRC 10681 / CIP 101130 / JCM 8532 / KCTC 2640 / LMG 13131 / VPI 4355), this protein is tRNA-specific 2-thiouridylase MnmA 1.